A 510-amino-acid polypeptide reads, in one-letter code: Glycogen synthase (510 aa).

Lysine 18 is a binding site for ADP-alpha-D-glucose.

Belongs to the glycosyltransferase 1 family. Bacterial/plant glycogen synthase subfamily.

It catalyses the reaction [(1-&gt;4)-alpha-D-glucosyl](n) + ADP-alpha-D-glucose = [(1-&gt;4)-alpha-D-glucosyl](n+1) + ADP + H(+). It participates in glycan biosynthesis; glycogen biosynthesis. Synthesizes alpha-1,4-glucan chains using ADP-glucose. In Bordetella parapertussis (strain 12822 / ATCC BAA-587 / NCTC 13253), this protein is Glycogen synthase.